Here is a 905-residue protein sequence, read N- to C-terminus: Nitrate reductase [NADPH] (905 aa).

Positions 1-42 (METSTTTTLLQQERIPENSEPISTHIHTHSLPPTPPGTAKPS) are disordered. Residue C179 participates in Mo-molybdopterin binding. The Cytochrome b5 heme-binding domain maps to 546 to 621 (NRKITIEELK…LPTYHIGTLD (76 aa)). Positions 581 and 604 each coordinate heme. The FAD-binding FR-type domain maps to 648 to 759 (KTWSKAILDK…KGPTGKFVYH (112 aa)). Residues 702-705 (RSYT), 719-723 (LIKIY), 733-735 (VMT), S783, and T786 each bind FAD. 875-884 (LLLVCGPPPM) lines the NADP(+) pocket.

It belongs to the nitrate reductase family. Homodimer. FAD is required as a cofactor. The cofactor is heme. Requires Mo-molybdopterin as cofactor.

The catalysed reaction is nitrite + NADP(+) + H2O = nitrate + NADPH + H(+). Functionally, nitrate reductase is a key enzyme involved in the first step of nitrate assimilation in plants, fungi and bacteria. This chain is Nitrate reductase [NADPH] (NIA), found in Fusarium oxysporum (Fusarium vascular wilt).